The primary structure comprises 363 residues: MAPAGSTRAKKGILERLDSGEVVVGDSGFLFTLEKRGFVKAGLWTPEAVVEHPSAVRQLHTEFLRAGADVLQTFTFSATEDNMASKWEAVNAAACDLAQEVAGGGGALVAGGICQTSLYKYHKDETRIKNIFRLQLEVFARKNVDFLIAEYFEHVEEAVWAVEVLREVGAPVAVTMCIGPEGDMHDVTPGECAVKLARAGADIIGVNCRFGPWTSLQTMKLMKEGLRDASLQAHLMVQCLGFHTPDCGKGGFVDLPEYPFGLEPRVATRWDIQKYAREAYNLGIRYIGGCCGFEPYHIRAIAEELAPERGFLPPASEKHGSWGSGLNMHTKPWIRARARREYWENLLPASGRPFCPSLSKPDA.

Residues 11 to 305 form the Hcy-binding domain; that stretch reads KGILERLDSG…YHIRAIAEEL (295 aa). Zn(2+) is bound by residues C208, C290, and C291. A Phosphoserine modification is found at S321.

Homotetramer. Requires Zn(2+) as cofactor. Expressed in fetal heart, lung, liver, kidney and eye.

It carries out the reaction S-methyl-L-methionine + L-homocysteine = 2 L-methionine + H(+). Its pathway is amino-acid biosynthesis; L-methionine biosynthesis via de novo pathway; L-methionine from L-homocysteine (BhmT route): step 1/1. Involved in the regulation of homocysteine metabolism. Converts homocysteine to methionine using S-methylmethionine (SMM) as a methyl donor. The polypeptide is S-methylmethionine--homocysteine S-methyltransferase BHMT2 (Bhmt2) (Mus musculus (Mouse)).